The chain runs to 267 residues: Orotidine 5'-phosphate decarboxylase (267 aa).

Serine 2 carries the N-acetylserine modification. Substrate is bound by residues aspartate 37, 59-61 (KTH), and 91-100 (DRKFADIGNT). Lysine 93 acts as the Proton donor in catalysis. Residues lysine 93 and lysine 209 each participate in a glycyl lysine isopeptide (Lys-Gly) (interchain with G-Cter in ubiquitin) cross-link. The substrate site is built by tyrosine 217 and arginine 235. Lysine 253 participates in a covalent cross-link: Glycyl lysine isopeptide (Lys-Gly) (interchain with G-Cter in ubiquitin).

The protein belongs to the OMP decarboxylase family.

It catalyses the reaction orotidine 5'-phosphate + H(+) = UMP + CO2. It participates in pyrimidine metabolism; UMP biosynthesis via de novo pathway; UMP from orotate: step 2/2. This Saccharomyces cerevisiae (strain ATCC 204508 / S288c) (Baker's yeast) protein is Orotidine 5'-phosphate decarboxylase (URA3).